The following is a 286-amino-acid chain: Oxidase hkm6 (286 aa).

His16, His25, and His215 together coordinate Cu cation.

The protein belongs to the tyrosinase family. Cu(2+) serves as cofactor.

It participates in secondary metabolite biosynthesis. Its function is as follows. Oxidase; part of the gene cluster that mediates the biosynthesis of hancockiamides, an unusual new family of N-cinnamoylated piperazines. The NRPS hkm10 and the NmrA-like reductase hkm9 are proposed to convert two molecules of L-Phe to the intermediary piperazine called xenocockiamide A. Xenocockiamide A is then converted to hancockiamide D via a series of hydroxylations and O-methylations. The tyrosinase hkm6 may catalyze an aromatic hydroxylation, then the 2-oxoglutarate-dependent Fe(II) dioxygenase hkm4 and the FAD-dependent phenol hydroxylase hkm7 may catalyze consecutive hydroxylations to install 2 more hydroxy groups, and the methyltransferase hkm8 probably catalyzes two methylations using 2 molecules of S-adenosyl-L-methionine (SAM). The NRPS hkm11 activates and transfers trans-cinnamate supplied by the PAL hkm12 to hancockiamide D and produces hancockiamide A. NRPS Hkm11 has the flexibility to tolerate the bulky hancockiamide G as a substrate and the absence of the acetyl-transferase hkm3 opens up the opportunity for hkm11 to introduce a second N-cinnamoyl moiety. The cytochrome P450 monooxygenase hkm5 catalyzes the methylenedioxy bridge formation, converting hancockiamide A into hancockiamide G. Hkm5 can also convert hancockiamide B into hancockiamide C, and hancockiamide D into hancockiamide H. The N-acetyltransferase hkm3 finally transfers an acetyl group to 1-N of piperazine, converting hancockiamide A into hancockiamide B and hancockiamide G into hancockiamide C. The chain is Oxidase hkm6 from Aspergillus hancockii.